A 224-amino-acid polypeptide reads, in one-letter code: MLLTHLHSDHIAELGDVLITSWVTNFAADPAPLPIIGPPGTAEVVEATLKAFGHDIGYRIAHHADLTTPPPIEVHEYTAGPAWDRDGVTIRVAPTDHRPVTPTIGFRIESDGASVVLAGDTVPCDSLDQLAAGADALVHTVIRKDIVTQIPQQRVKDICDYHSSVQEAAATANRAGVGTLVMTHYVPAIGPGQEEQWRALAATEFSGRIEVGNDLHRVEVHPRR.

Positions 120 and 184 each coordinate Zn(2+).

It belongs to the RNase Z family. As to quaternary structure, homodimer. The cofactor is Zn(2+).

The catalysed reaction is Endonucleolytic cleavage of RNA, removing extra 3' nucleotides from tRNA precursor, generating 3' termini of tRNAs. A 3'-hydroxy group is left at the tRNA terminus and a 5'-phosphoryl group is left at the trailer molecule.. Its function is as follows. Zinc phosphodiesterase, which displays some tRNA 3'-processing endonuclease activity. Probably involved in tRNA maturation, by removing a 3'-trailer from precursor tRNA. This chain is Putative ribonuclease Z (rnz), found in Mycobacterium tuberculosis (strain CDC 1551 / Oshkosh).